We begin with the raw amino-acid sequence, 536 residues long: G-protein coupled receptor Mth2 (536 aa).

Topologically, residues methionine 1–asparagine 210 are extracellular. 5 disulfide bridges follow: cysteine 17-cysteine 71, cysteine 73-cysteine 78, cysteine 82-cysteine 177, cysteine 83-cysteine 96, and cysteine 138-cysteine 197. 2 N-linked (GlcNAc...) asparagine glycosylation sites follow: asparagine 24 and asparagine 33. 6 N-linked (GlcNAc...) asparagine glycosylation sites follow: asparagine 103, asparagine 113, asparagine 118, asparagine 159, asparagine 184, and asparagine 203. A helical membrane pass occupies residues alanine 211–isoleucine 231. Topologically, residues proline 232–serine 241 are cytoplasmic. A helical membrane pass occupies residues leucine 242–tyrosine 262. At glutamine 263–valine 273 the chain is on the extracellular side. A helical membrane pass occupies residues phenylalanine 274 to phenylalanine 294. Over aspartate 295–arginine 314 the chain is Cytoplasmic. The chain crosses the membrane as a helical span at residues phenylalanine 315 to isoleucine 335. Residues alanine 336–alanine 365 lie on the Extracellular side of the membrane. The helical transmembrane segment at methionine 366–methionine 386 threads the bilayer. Residues threonine 387–lysine 417 are Cytoplasmic-facing. The helical transmembrane segment at phenylalanine 418–serine 438 threads the bilayer. The Extracellular segment spans residues tyrosine 439–lysine 449. Residues leucine 450–valine 470 form a helical membrane-spanning segment. The Cytoplasmic segment spans residues methionine 471–arginine 536. Residues arginine 487 to valine 506 are disordered. Low complexity predominate over residues glutamine 492–serine 505.

It belongs to the G-protein coupled receptor 2 family. Mth subfamily. In terms of assembly, homodimer.

Its subcellular location is the cell membrane. Involved in biological aging and stress response. Essential for adult survival. The chain is G-protein coupled receptor Mth2 (mth2) from Drosophila yakuba (Fruit fly).